An 878-amino-acid chain; its full sequence is Phosphoenolpyruvate carboxylase (878 aa).

Active-site residues include His-140 and Lys-545.

Belongs to the PEPCase type 1 family. It depends on Mg(2+) as a cofactor.

It catalyses the reaction oxaloacetate + phosphate = phosphoenolpyruvate + hydrogencarbonate. Functionally, forms oxaloacetate, a four-carbon dicarboxylic acid source for the tricarboxylic acid cycle. The sequence is that of Phosphoenolpyruvate carboxylase from Ectopseudomonas mendocina (strain ymp) (Pseudomonas mendocina).